The chain runs to 279 residues: Putative pyruvate, phosphate dikinase regulatory protein (279 aa).

Gly153–Thr160 lines the ADP pocket.

It belongs to the pyruvate, phosphate/water dikinase regulatory protein family. PDRP subfamily.

The catalysed reaction is N(tele)-phospho-L-histidyl/L-threonyl-[pyruvate, phosphate dikinase] + ADP = N(tele)-phospho-L-histidyl/O-phospho-L-threonyl-[pyruvate, phosphate dikinase] + AMP + H(+). It catalyses the reaction N(tele)-phospho-L-histidyl/O-phospho-L-threonyl-[pyruvate, phosphate dikinase] + phosphate + H(+) = N(tele)-phospho-L-histidyl/L-threonyl-[pyruvate, phosphate dikinase] + diphosphate. In terms of biological role, bifunctional serine/threonine kinase and phosphorylase involved in the regulation of the pyruvate, phosphate dikinase (PPDK) by catalyzing its phosphorylation/dephosphorylation. The polypeptide is Putative pyruvate, phosphate dikinase regulatory protein (Rhodopseudomonas palustris (strain HaA2)).